A 248-amino-acid chain; its full sequence is Caffeoyl-CoA O-methyltransferase 3 (248 aa).

Lys22 lines the substrate pocket. S-adenosyl-L-methionine is bound by residues Thr64, Glu86, Gly88–Val89, Ser94, Asp112, and Ala141. Asp164 is a substrate binding site. Asp164 contacts a divalent metal cation. S-adenosyl-L-methionine is bound at residue Asp166. A divalent metal cation contacts are provided by Asp190 and Asn191. Residue Asn195 participates in substrate binding.

This sequence belongs to the class I-like SAM-binding methyltransferase superfamily. Cation-dependent O-methyltransferase family. CCoAMT subfamily. A divalent metal cation is required as a cofactor. In terms of tissue distribution, mostly expressed in petal limbs and tubes, and, at low levels, in stems, roots and leaves.

Its subcellular location is the cytoplasm. The protein localises to the cytosol. The catalysed reaction is (E)-caffeoyl-CoA + S-adenosyl-L-methionine = (E)-feruloyl-CoA + S-adenosyl-L-homocysteine + H(+). It catalyses the reaction (E)-5-hydroxyferuloyl-CoA + S-adenosyl-L-methionine = (E)-sinapoyl-CoA + S-adenosyl-L-homocysteine + H(+). Its pathway is aromatic compound metabolism; phenylpropanoid biosynthesis. In terms of biological role, involved in the production of floral volatile phenylpropanoids in flowers of fragrant cultivars (e.g. cv. Mitchell and cv. V26) from cinnamic acid, a common precursor with the anthocyanin biosynthesis pathway involved in flower pigmentation. Methylates caffeoyl-CoA to feruloyl-CoA, also able to methylate 5-hydroxyferuloyl-CoA. This Petunia hybrida (Petunia) protein is Caffeoyl-CoA O-methyltransferase 3.